The sequence spans 225 residues: Transcriptional activator protein CUP2 (225 aa).

A DNA-binding region (copper-fist) is located at residues 1-40 (MVVINGVKYACETCIRGHRAAQCTHTDGPLQMIRRKGRPS). The interval 1–108 (MVVINGVKYA…KSKGGSCHRR (108 aa)) is binds copper and DNA. The Zn(2+) site is built by Cys-11, Cys-14, Cys-23, and His-25. Residues 109 to 225 (ANDEAAHVNG…QVSSHNSHSQ (117 aa)) are required for transcriptional activation.

Its subcellular location is the nucleus. In terms of biological role, trans-acting regulatory protein that activates transcription of the CUP1 gene (metallothionein) in response to copper ions. Binds to the CUP1 UAS sequence 5'-GCTTCTTTTCCGCTGA-3'. Binds DNA only in presence of copper or silver. Copper seems to alter the conformation of the protein. The polypeptide is Transcriptional activator protein CUP2 (CUP2) (Saccharomyces cerevisiae (strain ATCC 204508 / S288c) (Baker's yeast)).